Here is a 123-residue protein sequence, read N- to C-terminus: PTS system glucitol/sorbitol-specific EIIA component (123 aa).

The PTS EIIA type-5 domain maps to 3 to 116 (VIYQTTITRI…PDDIAPGSVL (114 aa)). Histidine 43 acts as the Tele-phosphohistidine intermediate in catalysis. Phosphohistidine; by HPr is present on histidine 43.

Its subcellular location is the cytoplasm. Functionally, the phosphoenolpyruvate-dependent sugar phosphotransferase system (sugar PTS), a major carbohydrate active transport system, catalyzes the phosphorylation of incoming sugar substrates concomitantly with their translocation across the cell membrane. The enzyme II complex composed of SrlA, SrlB and SrlE is involved in glucitol/sorbitol transport. It can also use D-mannitol. This chain is PTS system glucitol/sorbitol-specific EIIA component (srlB), found in Escherichia coli (strain K12).